We begin with the raw amino-acid sequence, 425 residues long: Adenylosuccinate synthetase (425 aa).

Residues 12–18 and 40–42 each bind GTP; these read GDEGKAK and GHT. The active-site Proton acceptor is Asp13. Asp13 and Gly40 together coordinate Mg(2+). Residues 13-16, 38-41, Thr130, Arg144, Gln224, Thr239, and Arg303 contribute to the IMP site; these read DEGK and NAGH. His41 acts as the Proton donor in catalysis. 299–305 contacts substrate; it reads ATTGRPR. GTP is bound by residues Arg305, 331-333, and 411-413; these read KID and STG.

It belongs to the adenylosuccinate synthetase family. Homodimer. It depends on Mg(2+) as a cofactor.

It localises to the cytoplasm. The enzyme catalyses IMP + L-aspartate + GTP = N(6)-(1,2-dicarboxyethyl)-AMP + GDP + phosphate + 2 H(+). The protein operates within purine metabolism; AMP biosynthesis via de novo pathway; AMP from IMP: step 1/2. Plays an important role in the de novo pathway of purine nucleotide biosynthesis. Catalyzes the first committed step in the biosynthesis of AMP from IMP. This is Adenylosuccinate synthetase from Leptospira interrogans serogroup Icterohaemorrhagiae serovar copenhageni (strain Fiocruz L1-130).